Reading from the N-terminus, the 289-residue chain is Rhodopsin (289 aa).

Residues 1 to 7 (YLVNPAA) are Extracellular-facing. A helical membrane pass occupies residues 8–32 (YAALGAYMFLLILIGFPVNFLTLYV). Residues 33 to 44 (TIEHKKLRTPLN) lie on the Cytoplasmic side of the membrane. A helical membrane pass occupies residues 45–67 (YILLNLAVANLFMVLGGFTTTMY). The Extracellular portion of the chain corresponds to 68-81 (TSMHGYFVLGRLGC). Cysteines 81 and 158 form a disulfide. A helical transmembrane segment spans residues 82–104 (NLEGFFATMGGEIALWSLVVLAI). Positions 105–107 (ERW) match the 'Ionic lock' involved in activated form stabilization motif. Over 105–123 (ERWIVVCKPISNFRFTEDH) the chain is Cytoplasmic. A helical membrane pass occupies residues 124–144 (AIMGLAFTWVMALSCAVPPLV). Residues 145 to 173 (GWSRYIPEGMQCSCGVDYYTRAEGFNNES) lie on the Extracellular side of the membrane. Asn171 carries an N-linked (GlcNAc...) asparagine glycan. The helical transmembrane segment at 174–195 (FVIYMFIVHFLTPLIIISFCYG) threads the bilayer. The Cytoplasmic segment spans residues 196 to 223 (RLLCAVKEAAAAQQESETTQRAEREVSR). Residues 224–245 (MVVMMVISFLMCWLPYASVAWY) traverse the membrane as a helical segment. Residues 246-257 (IFCNQGSEFGPI) lie on the Extracellular side of the membrane. The helical transmembrane segment at 258 to 279 (FMTLPAFFAKSSAIYNPLIYIC) threads the bilayer. An N6-(retinylidene)lysine modification is found at Lys267. Topologically, residues 280-289 (MNKQFRHCMI) are cytoplasmic.

It belongs to the G-protein coupled receptor 1 family. Opsin subfamily. In terms of processing, phosphorylated on some or all of the serine and threonine residues present in the C-terminal region. Contains one covalently linked retinal chromophore.

Its subcellular location is the membrane. The protein localises to the cell projection. It localises to the cilium. The protein resides in the photoreceptor outer segment. Photoreceptor required for image-forming vision at low light intensity. While most salt water fish species use retinal as chromophore, most freshwater fish use 3-dehydroretinal, or a mixture of retinal and 3-dehydroretinal. Light-induced isomerization of 11-cis to all-trans retinal triggers a conformational change that activates signaling via G-proteins. Subsequent receptor phosphorylation mediates displacement of the bound G-protein alpha subunit by arrestin and terminates signaling. The protein is Rhodopsin (rho) of Cottocomephorus inermis (Longfin Baikal sculpin).